The primary structure comprises 305 residues: uncharacterized protein (305 aa).

A helical transmembrane segment spans residues Ile-8–Phe-28.

Its subcellular location is the membrane. This is an uncharacterized protein from Bacillus subtilis (strain 168).